Reading from the N-terminus, the 489-residue chain is Cysteine--tRNA ligase (489 aa).

C27 contributes to the Zn(2+) binding site. A 'HIGH' region motif is present at residues 29-39 (VTVYDLCHLGH). 3 residues coordinate Zn(2+): C211, H236, and E240. The 'KMSKS' region signature appears at 268 to 272 (KMSKS). Residue K271 participates in ATP binding.

This sequence belongs to the class-I aminoacyl-tRNA synthetase family. As to quaternary structure, monomer. Zn(2+) is required as a cofactor.

It is found in the cytoplasm. The enzyme catalyses tRNA(Cys) + L-cysteine + ATP = L-cysteinyl-tRNA(Cys) + AMP + diphosphate. The protein is Cysteine--tRNA ligase of Prochlorococcus marinus (strain MIT 9312).